A 300-amino-acid polypeptide reads, in one-letter code: Transcription initiation factor IIB (300 aa).

The TFIIB-type zinc finger occupies 2-34 (NKQKVCPACESAELIYDPERGEIVCAKCGYVIE). Residues Cys-7, Cys-10, Cys-26, and Cys-29 each coordinate Zn(2+). 2 consecutive repeat copies span residues 114 to 197 (SELD…ARNL) and 210 to 291 (DYVN…ELVE).

Belongs to the TFIIB family.

Functionally, stabilizes TBP binding to an archaeal box-A promoter. Also responsible for recruiting RNA polymerase II to the pre-initiation complex (DNA-TBP-TFIIB). In Pyrococcus furiosus (strain ATCC 43587 / DSM 3638 / JCM 8422 / Vc1), this protein is Transcription initiation factor IIB.